Reading from the N-terminus, the 445-residue chain is Oxysterols receptor LXR-alpha (445 aa).

2 disordered regions span residues 1 to 34 and 63 to 86; these read MSLW…QGGN and ALLP…KKGP. The segment at 1–94 is transactivation AF-1; required for ligand-independent transactivation function; the sequence is MSLWLEASMP…GPAPKMLGNE (94 aa). The segment at residues 93–168 is a DNA-binding region (nuclear receptor); it reads NELCSVCGDK…AGMREECVLS (76 aa). NR C4-type zinc fingers lie at residues 96–116 and 132–156; these read CSVC…CEGC and CHSG…LRKC. The residue at position 191 (Ser-191) is a Phosphoserine. The segment at 203-445 is transactivation AF-2; required for ligand-dependent transactivation function; mediates interaction with CCAR2; it reads QLSPEQLGMI…LLSEIWDVHE (243 aa). One can recognise an NR LBD domain in the interval 207 to 445; the sequence is EQLGMIEKLV…LLSEIWDVHE (239 aa).

Belongs to the nuclear hormone receptor family. NR1 subfamily. In terms of assembly, heterodimer of NR1H3 and RXR (retinoic acid receptor). Interacts with CCAR2 (via N-terminus) in a ligand-independent manner. Interacts with SIRT1 and this interaction is inhibited by CCAR2. Post-translationally, ubiquitinated. Ubiquitination by UBR5 leads to its degradation: UBR5 specifically recognizes and binds ligand-bound NR1H3 when it is not associated with coactivators (NCOAs). In presence of NCOAs, the UBR5-degron is not accessible, preventing its ubiquitination and degradation.

Its subcellular location is the nucleus. The protein localises to the cytoplasm. Nuclear receptor that exhibits a ligand-dependent transcriptional activation activity. Interaction with retinoic acid receptor (RXR) shifts RXR from its role as a silent DNA-binding partner to an active ligand-binding subunit in mediating retinoid responses through target genes defined by LXRES. LXRES are DR4-type response elements characterized by direct repeats of two similar hexanuclotide half-sites spaced by four nucleotides. Plays an important role in the regulation of cholesterol homeostasis, regulating cholesterol uptake through MYLIP-dependent ubiquitination of LDLR, VLDLR and LRP8. Interplays functionally with RORA for the regulation of genes involved in liver metabolism. Induces LPCAT3-dependent phospholipid remodeling in endoplasmic reticulum (ER) membranes of hepatocytes, driving SREBF1 processing and lipogenesis. Via LPCAT3, triggers the incorporation of arachidonate into phosphatidylcholines of ER membranes, increasing membrane dynamics and enabling triacylglycerols transfer to nascent very low-density lipoprotein (VLDL) particles. Via LPCAT3 also counteracts lipid-induced ER stress response and inflammation, likely by modulating SRC kinase membrane compartmentalization and limiting the synthesis of lipid inflammatory mediators. The polypeptide is Oxysterols receptor LXR-alpha (Nr1h3) (Mus musculus (Mouse)).